Consider the following 544-residue polypeptide: MAAKNIKYNEEARKKIHKGVKTLAEAVKVTLGPKGRHVVIDKSFGSPQVTKDGVTVAKEIELEDKHENMGAQMVKEVASKTADKAGDGTTTATVLAEAIYSEGLRNVTAGANPMDLKRGIDKAVKVVVDELKKISKPVQHHKEIAQVATISANNDSEIGNLIAEAMEKVGKNGSITVEEAKGFETVLDVVEGMNFNRGYLSSYFSTNPETQECVLEDALILIYDKKISGIKDFLPVLQQVAESGRPLLIIAEEIEGEALATLVVNRLRAGFRVCAVKAPGFGDRRKAMLEDIAILTGGQLVSEELGMKLENTTLAMLGKAKKVIVTKEDTTIVEGLGNKPDIQARCDNIKKQIEDSTSDYDKEKLQERLAKLSGGVAVIRVGAATEIEMKEKKDRVDDAQHATIAAVEEGILPGGGTALVRCIPTLEAFLPMLANEDEAIGTRIILKALTAPLKQIASNAGKEGAIICQQVLARSANEGYDALRDAYTDMIDAGILDPTKVTRSALESAASIAGLLLTTEALIADIPEEKSSSAPAMPSAGMDY.

Residues 30–33 (TLGP), Lys51, 87–91 (DGTTT), Gly415, 481–483 (DAL), and Asp497 each bind ATP.

This sequence belongs to the chaperonin (HSP60) family. As to quaternary structure, forms a cylinder of 14 subunits composed of two heptameric rings stacked back-to-back. Interacts with the co-chaperonin GroES.

Its subcellular location is the cytoplasm. It carries out the reaction ATP + H2O + a folded polypeptide = ADP + phosphate + an unfolded polypeptide.. Its function is as follows. Together with its co-chaperonin GroES, plays an essential role in assisting protein folding. The GroEL-GroES system forms a nano-cage that allows encapsulation of the non-native substrate proteins and provides a physical environment optimized to promote and accelerate protein folding. The polypeptide is Chaperonin GroEL 1 (Chlamydia pneumoniae (Chlamydophila pneumoniae)).